The sequence spans 65 residues: MKAADVRSKSVDQLSDELVKLKKEQFNLRFQAATGQLEKTGRVTEVRRDIARVKTILREKSQAGK.

Belongs to the universal ribosomal protein uL29 family.

The chain is Large ribosomal subunit protein uL29 from Hyphomonas neptunium (strain ATCC 15444).